Here is a 477-residue protein sequence, read N- to C-terminus: MTQSRLHAAQNALAKLHERRGNTFYPHFHLAPPAGWMNDPNGLIWFNDRYHAFYQHHPMSEHWGPMHWGHATSDDMIHWQHEPIALAPGDENDKDGCFSGSAVDDNGVLSLIYTGHVWLDGAGNDDAIREVQCLATSRDGIHFEKQGVILTPPEGIMHFRDPKVWREADTWWMVVGAKDPGNTGQILLYRGSSLREWTFDRVLAHADAGESYMWECPDFFSLGDQHYLMFSPQGMNAEGYSYRNRFQSGVIPGMWSPGRLFAQSGHFTELDNGHDFYAPQSFVAKDGRRIVIGWMDMWESPMPSKREGWAGCMTLARELSESNGKLLQRPVHEAESLRQQHQSISPRTISNKYVLQENAQAVEIQLQWALKNSDAEHYGLQLGAGMRLYIDNQSERLVLWRYYPHENLDGYRSIPLPQGDMLALRIFIDTSSVEVFINDGEAVMSSRIYPQPEERELSLYASHGVAVLQHGALWQLG.

Substrate-binding positions include 36-39, Gln-55, Trp-63, 98-99, 160-161, Glu-215, and Trp-298; these read WMND, FS, and RD. Asp-39 is a catalytic residue.

The protein belongs to the glycosyl hydrolase 32 family.

Its subcellular location is the cytoplasm. The catalysed reaction is Hydrolysis of terminal non-reducing beta-D-fructofuranoside residues in beta-D-fructofuranosides.. Its pathway is glycan biosynthesis; sucrose metabolism. In terms of biological role, enables the bacterium to metabolize sucrose as a sole carbon source. The polypeptide is Sucrose-6-phosphate hydrolase (cscA) (Escherichia coli).